The primary structure comprises 139 residues: Putative nickel-responsive regulator (139 aa).

Residues His-79, His-90, His-92, and Cys-98 each coordinate Ni(2+).

Belongs to the transcriptional regulatory CopG/NikR family. It depends on Ni(2+) as a cofactor.

Functionally, transcriptional regulator. This Geobacter sp. (strain M21) protein is Putative nickel-responsive regulator.